A 171-amino-acid polypeptide reads, in one-letter code: CDP-archaeol synthase (171 aa).

5 helical membrane-spanning segments follow: residues 7–27, 55–75, 84–104, 115–135, and 141–161; these read MFWALWYILPAYFANASPVLL, FLGGVSVGTLVGVLQYYLTPA, VLLAFLLSFGALMGDLVGSFI, PAVGLDQLGFLISALAFAYPV, and GQMLFLLIFTPLVHWGANYFA.

The protein belongs to the CDP-archaeol synthase family. Mg(2+) serves as cofactor.

The protein resides in the cell membrane. It carries out the reaction 2,3-bis-O-(geranylgeranyl)-sn-glycerol 1-phosphate + CTP + H(+) = CDP-2,3-bis-O-(geranylgeranyl)-sn-glycerol + diphosphate. The protein operates within membrane lipid metabolism; glycerophospholipid metabolism. Catalyzes the formation of CDP-2,3-bis-(O-geranylgeranyl)-sn-glycerol (CDP-archaeol) from 2,3-bis-(O-geranylgeranyl)-sn-glycerol 1-phosphate (DGGGP) and CTP. This reaction is the third ether-bond-formation step in the biosynthesis of archaeal membrane lipids. The sequence is that of CDP-archaeol synthase from Thermococcus gammatolerans (strain DSM 15229 / JCM 11827 / EJ3).